Here is a 346-residue protein sequence, read N- to C-terminus: Uroporphyrinogen decarboxylase (346 aa).

Residues 21–25 (RQAGR), Asp71, Tyr146, Ser201, and His316 each bind substrate.

It belongs to the uroporphyrinogen decarboxylase family. As to quaternary structure, homodimer.

The protein resides in the cytoplasm. It catalyses the reaction uroporphyrinogen III + 4 H(+) = coproporphyrinogen III + 4 CO2. It functions in the pathway porphyrin-containing compound metabolism; protoporphyrin-IX biosynthesis; coproporphyrinogen-III from 5-aminolevulinate: step 4/4. Catalyzes the decarboxylation of four acetate groups of uroporphyrinogen-III to yield coproporphyrinogen-III. The sequence is that of Uroporphyrinogen decarboxylase from Rickettsia rickettsii (strain Iowa).